A 228-amino-acid polypeptide reads, in one-letter code: MKISFHGQSCIKIITGDTTILVDPFISGNEKCDLKAEEQMPDFIVLSHGHDDHVGDTVEIAKNSGATVICNADLASFLAVEDGLENIAPMHIGGKRQFSFGQVKLTQAFHGSQTVRDGRIVNLGFPTGIVFTIEDKNIYFAGDTGLFSDMKLIGELNPLDVAFLPIGDNFTMGPEDAAIAARFLQAKLVVPMHYNTFPLIAQDPHKFVASLDEGITGKVLEIGEGIEI.

This sequence belongs to the UPF0173 family.

This chain is UPF0173 metal-dependent hydrolase Lm4b_01588, found in Listeria monocytogenes serotype 4b (strain CLIP80459).